The primary structure comprises 454 residues: Bifunctional protein GlmU (454 aa).

Residues 1–228 are pyrophosphorylase; it reads MSPLHVVILA…PFEVQGVNNR (228 aa). Residues 9–12, K23, Q74, 79–80, 101–103, G138, E153, N168, and N226 contribute to the UDP-N-acetyl-alpha-D-glucosamine site; these read LAAG, GT, and YGD. D103 lines the Mg(2+) pocket. Residue N226 coordinates Mg(2+). Residues 229–249 are linker; sequence LQLAELERWYQRQQAERLMTE. Residues 250–454 are N-acetyltransferase; that stretch reads GASLADPARI…IAGWERPKKA (205 aa). 2 residues coordinate UDP-N-acetyl-alpha-D-glucosamine: R332 and K350. H362 acts as the Proton acceptor in catalysis. Residues Y365 and N376 each coordinate UDP-N-acetyl-alpha-D-glucosamine. Acetyl-CoA is bound by residues A379, 385 to 386, S404, A422, and R439; that span reads NY.

The protein in the N-terminal section; belongs to the N-acetylglucosamine-1-phosphate uridyltransferase family. This sequence in the C-terminal section; belongs to the transferase hexapeptide repeat family. In terms of assembly, homotrimer. Mg(2+) is required as a cofactor.

The protein resides in the cytoplasm. It carries out the reaction alpha-D-glucosamine 1-phosphate + acetyl-CoA = N-acetyl-alpha-D-glucosamine 1-phosphate + CoA + H(+). It catalyses the reaction N-acetyl-alpha-D-glucosamine 1-phosphate + UTP + H(+) = UDP-N-acetyl-alpha-D-glucosamine + diphosphate. It participates in nucleotide-sugar biosynthesis; UDP-N-acetyl-alpha-D-glucosamine biosynthesis; N-acetyl-alpha-D-glucosamine 1-phosphate from alpha-D-glucosamine 6-phosphate (route II): step 2/2. Its pathway is nucleotide-sugar biosynthesis; UDP-N-acetyl-alpha-D-glucosamine biosynthesis; UDP-N-acetyl-alpha-D-glucosamine from N-acetyl-alpha-D-glucosamine 1-phosphate: step 1/1. The protein operates within bacterial outer membrane biogenesis; LPS lipid A biosynthesis. In terms of biological role, catalyzes the last two sequential reactions in the de novo biosynthetic pathway for UDP-N-acetylglucosamine (UDP-GlcNAc). The C-terminal domain catalyzes the transfer of acetyl group from acetyl coenzyme A to glucosamine-1-phosphate (GlcN-1-P) to produce N-acetylglucosamine-1-phosphate (GlcNAc-1-P), which is converted into UDP-GlcNAc by the transfer of uridine 5-monophosphate (from uridine 5-triphosphate), a reaction catalyzed by the N-terminal domain. The polypeptide is Bifunctional protein GlmU (Marinobacter nauticus (strain ATCC 700491 / DSM 11845 / VT8) (Marinobacter aquaeolei)).